The primary structure comprises 83 residues: Small ribosomal subunit protein eS21 (83 aa).

M1 is subject to N-acetylmethionine. K81 is subject to N6-acetyllysine.

This sequence belongs to the eukaryotic ribosomal protein eS21 family. In terms of assembly, component of the 40S small ribosomal subunit.

The protein localises to the cytoplasm. It is found in the cytosol. Its subcellular location is the rough endoplasmic reticulum. In terms of biological role, component of the small ribosomal subunit. The ribosome is a large ribonucleoprotein complex responsible for the synthesis of proteins in the cell. In Mus musculus (Mouse), this protein is Small ribosomal subunit protein eS21 (Rps21).